The sequence spans 113 residues: MTPGVVHASPPQSQRVPRQAPCEWAIRNIGQKPKEPNCHNCGTHIGLRSKTLRGTPNYLPIRQDTHPPSVIFCLAGVGVPGGTCRPAPCVPRFAALPWATNHPGPGCLSDLRA.

Expressed in fetal and adult liver.

The polypeptide is Putative insulin-like growth factor 2-associated protein (Homo sapiens (Human)).